Here is a 129-residue protein sequence, read N- to C-terminus: Small ribosomal subunit protein uS12 (129 aa).

It belongs to the universal ribosomal protein uS12 family. In terms of assembly, part of the 30S ribosomal subunit. Contacts proteins S8 and S17. May interact with IF1 in the 30S initiation complex.

Its function is as follows. With S4 and S5 plays an important role in translational accuracy. Functionally, interacts with and stabilizes bases of the 16S rRNA that are involved in tRNA selection in the A site and with the mRNA backbone. Located at the interface of the 30S and 50S subunits, it traverses the body of the 30S subunit contacting proteins on the other side and probably holding the rRNA structure together. The combined cluster of proteins S8, S12 and S17 appears to hold together the shoulder and platform of the 30S subunit. The polypeptide is Small ribosomal subunit protein uS12 (Rickettsia typhi (strain ATCC VR-144 / Wilmington)).